Reading from the N-terminus, the 247-residue chain is Large ribosomal subunit protein uL24m (247 aa).

The KOW domain maps to 84 to 117 (FFRGDRIEVLVGKDKGKQGIVTQVIPERNWVIVE).

This sequence belongs to the universal ribosomal protein uL24 family. As to quaternary structure, component of the mitochondrial ribosome large subunit (39S) which comprises a 16S rRNA and about 50 distinct proteins.

It is found in the mitochondrion. The sequence is that of Large ribosomal subunit protein uL24m (mRpL24) from Drosophila melanogaster (Fruit fly).